A 445-amino-acid chain; its full sequence is Tol-Pal system protein TolB (445 aa).

The signal sequence occupies residues 1-26 (MLNRRNFIRTTSALAASTALPGYAFG).

The protein belongs to the TolB family. As to quaternary structure, the Tol-Pal system is composed of five core proteins: the inner membrane proteins TolA, TolQ and TolR, the periplasmic protein TolB and the outer membrane protein Pal. They form a network linking the inner and outer membranes and the peptidoglycan layer.

It localises to the periplasm. In terms of biological role, part of the Tol-Pal system, which plays a role in outer membrane invagination during cell division and is important for maintaining outer membrane integrity. The protein is Tol-Pal system protein TolB of Jannaschia sp. (strain CCS1).